We begin with the raw amino-acid sequence, 37 residues long: Large ribosomal subunit protein bL36c (37 aa).

The protein belongs to the bacterial ribosomal protein bL36 family.

It localises to the plastid. The protein resides in the chloroplast. This Lolium perenne (Perennial ryegrass) protein is Large ribosomal subunit protein bL36c.